The primary structure comprises 392 residues: GDSL esterase/lipase ESM1 (392 aa).

Positions 1-28 (MADNLNLVSVLGVLLVLTIFHNPIIVYA) are cleaved as a signal peptide. Residue Ser-43 is the Nucleophile of the active site. Asn-146, Asn-166, and Asn-290 each carry an N-linked (GlcNAc...) asparagine glycan. Catalysis depends on residues Asp-324 and His-327.

The protein belongs to the 'GDSL' lipolytic enzyme family.

Its subcellular location is the secreted. In terms of biological role, represses or inhibits nitriles production from methionine-derived and from indol-3-ylmethyl glucosinolates. Favors isothiocyanate production. The sequence is that of GDSL esterase/lipase ESM1 (ESM1) from Arabidopsis thaliana (Mouse-ear cress).